Reading from the N-terminus, the 489-residue chain is Cytochrome P450 2C3 (489 aa).

Heme is bound at residue cysteine 434.

It belongs to the cytochrome P450 family. It depends on heme as a cofactor.

Its subcellular location is the endoplasmic reticulum membrane. The protein resides in the microsome membrane. It carries out the reaction an organic molecule + reduced [NADPH--hemoprotein reductase] + O2 = an alcohol + oxidized [NADPH--hemoprotein reductase] + H2O + H(+). Cytochromes P450 are a group of heme-thiolate monooxygenases. In liver microsomes, this enzyme is involved in an NADPH-dependent electron transport pathway. It oxidizes a variety of structurally unrelated compounds, including steroids, fatty acids, and xenobiotics. The polypeptide is Cytochrome P450 2C3 (CYP2C3) (Oryctolagus cuniculus (Rabbit)).